The primary structure comprises 267 residues: Syntaxin-72 (267 aa).

Over M1 to N244 the chain is Cytoplasmic. Residues K53–L87 adopt a coiled-coil conformation. The t-SNARE coiled-coil homology domain occupies E173–Q235. The chain crosses the membrane as a helical; Anchor for type IV membrane protein span at residues F245–A265. Residues L266–N267 lie on the Vesicular side of the membrane.

It belongs to the syntaxin family. Part of the t-SNARE complex. As to expression, expressed in root, leaf, stem, flower and silique.

It localises to the membrane. In terms of biological role, vesicle trafficking protein that functions in the secretory pathway. This Arabidopsis thaliana (Mouse-ear cress) protein is Syntaxin-72 (SYP72).